The primary structure comprises 388 residues: S-adenosylmethionine synthase (388 aa).

His17 contacts ATP. Residue Asp19 participates in Mg(2+) binding. Glu45 provides a ligand contact to K(+). L-methionine-binding residues include Glu58 and Gln106. Residues 106–116 form a flexible loop region; it reads QSAHIAQGVDK. ATP-binding positions include 166–168, Asp241, 247–248, Ala264, and Lys268; these read DAK and RK. Asp241 serves as a coordination point for L-methionine. Lys272 lines the L-methionine pocket.

The protein belongs to the AdoMet synthase family. Homotetramer; dimer of dimers. Mg(2+) is required as a cofactor. K(+) serves as cofactor.

Its subcellular location is the cytoplasm. It catalyses the reaction L-methionine + ATP + H2O = S-adenosyl-L-methionine + phosphate + diphosphate. It functions in the pathway amino-acid biosynthesis; S-adenosyl-L-methionine biosynthesis; S-adenosyl-L-methionine from L-methionine: step 1/1. Its function is as follows. Catalyzes the formation of S-adenosylmethionine (AdoMet) from methionine and ATP. The overall synthetic reaction is composed of two sequential steps, AdoMet formation and the subsequent tripolyphosphate hydrolysis which occurs prior to release of AdoMet from the enzyme. The polypeptide is S-adenosylmethionine synthase (Cereibacter sphaeroides (strain ATCC 17023 / DSM 158 / JCM 6121 / CCUG 31486 / LMG 2827 / NBRC 12203 / NCIMB 8253 / ATH 2.4.1.) (Rhodobacter sphaeroides)).